Reading from the N-terminus, the 199-residue chain is Protein GrpE (199 aa).

The tract at residues 1–27 is disordered; the sequence is MSEQNTNHESPEQNVAHDNIEHSDSIL. Basic and acidic residues predominate over residues 18-27; sequence DNIEHSDSIL.

The protein belongs to the GrpE family. As to quaternary structure, homodimer.

The protein resides in the cytoplasm. Participates actively in the response to hyperosmotic and heat shock by preventing the aggregation of stress-denatured proteins, in association with DnaK and GrpE. It is the nucleotide exchange factor for DnaK and may function as a thermosensor. Unfolded proteins bind initially to DnaJ; upon interaction with the DnaJ-bound protein, DnaK hydrolyzes its bound ATP, resulting in the formation of a stable complex. GrpE releases ADP from DnaK; ATP binding to DnaK triggers the release of the substrate protein, thus completing the reaction cycle. Several rounds of ATP-dependent interactions between DnaJ, DnaK and GrpE are required for fully efficient folding. The protein is Protein GrpE of Psychrobacter sp. (strain St1).